A 290-amino-acid chain; its full sequence is Arylamine N-acetyltransferase 1 (290 aa).

Methionine 1 is subject to N-acetylmethionine. Cysteine 68 (acyl-thioester intermediate) is an active-site residue. Residues threonine 103 and glycine 104 each contribute to the CoA site. 106–107 (IH) contributes to the substrate binding site. Active-site residues include histidine 107 and aspartate 122. The CoA site is built by tyrosine 208 and serine 214.

Belongs to the arylamine N-acetyltransferase family.

It is found in the cytoplasm. It carries out the reaction an arylamine + acetyl-CoA = an N-acetylarylamine + CoA. Participates in the detoxification of a plethora of hydrazine and arylamine drugs. Catalyzes the N- or O-acetylation of various arylamine and heterocyclic amine substrates and is able to bioactivate several known carcinogens. This is Arylamine N-acetyltransferase 1 (NAT1) from Homo sapiens (Human).